Consider the following 206-residue polypeptide: Large ribosomal subunit protein uL3 (206 aa).

Residues serine 127–alanine 151 are disordered.

Belongs to the universal ribosomal protein uL3 family. In terms of assembly, part of the 50S ribosomal subunit. Forms a cluster with proteins L14 and L19.

Its function is as follows. One of the primary rRNA binding proteins, it binds directly near the 3'-end of the 23S rRNA, where it nucleates assembly of the 50S subunit. This Borrelia garinii subsp. bavariensis (strain ATCC BAA-2496 / DSM 23469 / PBi) (Borreliella bavariensis) protein is Large ribosomal subunit protein uL3.